The chain runs to 173 residues: RNA pyrophosphohydrolase (173 aa).

The Nudix hydrolase domain maps to 11-164 (PYRKCVGILV…KKHVYTQVVK (154 aa)). The Nudix box motif lies at 52-73 (GGINQGEKPIDAARRELYEETG).

Belongs to the Nudix hydrolase family. RppH subfamily. A divalent metal cation is required as a cofactor.

Accelerates the degradation of transcripts by removing pyrophosphate from the 5'-end of triphosphorylated RNA, leading to a more labile monophosphorylated state that can stimulate subsequent ribonuclease cleavage. This is RNA pyrophosphohydrolase from Bartonella clarridgeiae.